A 320-amino-acid polypeptide reads, in one-letter code: MDTHRADASQRSQAPAARPRHAVHSIDHYALEVPDLAVAERFLDAFGLTVARTPECLEVYAADQRCWARFYEGERKRLAYLSFSCFEGDFAGIRQQLAASGATLVEDPRYGDESGVWFFDPDGNLVQVKIGPKTSPSSKSPARLEGAPGGQRGAVVRSQVQRVLPRRLSHVLLFTPSVQRALDFYRDALGLRLSDRSDDVIAFTHAPYGSDHHLLALVKSSARGWHHAAWDVADVNEVGQGASQMAKAGYTQGWGTGRHVLGSNYFFYVLDPWGSFCEYSADIDYIPAGQAWPAGDFAAEDSLYQWGPDVPEYFVRNTEA.

Disordered stretches follow at residues 1–21 and 131–153; these read MDTH…RPRH and GPKT…GQRG. VOC domains are found at residues 25 to 131 and 167 to 282; these read SIDH…VKIG and RLSH…YSAD. Histidine 170, histidine 227, and glutamate 278 together coordinate Fe cation.

It belongs to the extradiol ring-cleavage dioxygenase family. Fe(2+) is required as a cofactor.

It carries out the reaction catechol + O2 = (2Z,4E)-2-hydroxy-6-oxohexa-2,4-dienoate + H(+). The protein is Metapyrocatechase 2 (mcpII) of Cupriavidus necator (Alcaligenes eutrophus).